We begin with the raw amino-acid sequence, 182 residues long: Isopentenyl-diphosphate Delta-isomerase (182 aa).

Mn(2+) is bound by residues His25 and His32. The 135-residue stretch at 30-164 folds into the Nudix hydrolase domain; sequence LLHLAFSSWL…PWAFSPWMVM (135 aa). The active site involves Cys67. Cys67 serves as a coordination point for Mg(2+). His69 is a Mn(2+) binding site. Glu87 contacts Mg(2+). Positions 114 and 116 each coordinate Mn(2+). Glu116 is an active-site residue.

It belongs to the IPP isomerase type 1 family. As to quaternary structure, homodimer. Requires Mg(2+) as cofactor. Mn(2+) is required as a cofactor.

The protein resides in the cytoplasm. The enzyme catalyses isopentenyl diphosphate = dimethylallyl diphosphate. It participates in isoprenoid biosynthesis; dimethylallyl diphosphate biosynthesis; dimethylallyl diphosphate from isopentenyl diphosphate: step 1/1. Catalyzes the 1,3-allylic rearrangement of the homoallylic substrate isopentenyl (IPP) to its highly electrophilic allylic isomer, dimethylallyl diphosphate (DMAPP). The chain is Isopentenyl-diphosphate Delta-isomerase from Escherichia coli O6:H1 (strain CFT073 / ATCC 700928 / UPEC).